A 1921-amino-acid polypeptide reads, in one-letter code: Endoribonuclease Dicer (1921 aa).

The Helicase ATP-binding domain maps to 51-227; it reads LLEAALDHNT…ELEEKIKKLE (177 aa). 64-71 is an ATP binding site; the sequence is LNTGSGKT. The DECH box motif lies at 175 to 178; that stretch reads DECH. Residues 409 to 433 are disordered; sequence YVSWSDSEDDDEDEEIEEKEKPETN. Over residues 414-425 the composition is skewed to acidic residues; the sequence is DSEDDDEDEEIE. Residues 433–602 enclose the Helicase C-terminal domain; that stretch reads NFPSPFTNIL…SVDTSETETE (170 aa). The Dicer dsRNA-binding fold domain occupies 630–722; it reads AIGHINRYCA…MPVGKETVKY (93 aa). The segment at 727–746 is disordered; sequence DLHDEEETSVPGRPGSTKRR. The PAZ domain occupies 895-1042; the sequence is KFMEDIEKSE…LVPELCAIHP (148 aa). The interval 1270 to 1289 is disordered; sequence NLSKDKVDSEKNTSSGYSSK. RNase III domains follow at residues 1277–1404 and 1665–1823; these read DSEK…EETT and FENF…MDSG. Mg(2+) contacts are provided by glutamate 1317, aspartate 1396, glutamate 1399, and glutamate 1704. The disordered stretch occupies residues 1782 to 1801; it reads QGMDSELRRSEEDEEKEEDI. Mg(2+) contacts are provided by aspartate 1809 and glutamate 1812. In terms of domain architecture, DRBM spans 1848–1913; the sequence is VPRSPVRELL…ARRALRSLKA (66 aa).

It belongs to the helicase family. Dicer subfamily. In terms of assembly, component of the RISC loading complex (RLC), or micro-RNA (miRNA) loading complex (miRLC), which is composed of DICER1, AGO2 and TARBP2; DICER1 and TARBP2 are required to process precursor miRNAs (pre-miRNAs) to mature miRNAs and then load them onto AGO2. Note that the trimeric RLC/miRLC is also referred to as RISC. The cofactor is Mg(2+). Mn(2+) serves as cofactor.

The protein localises to the cytoplasm. It catalyses the reaction Endonucleolytic cleavage to 5'-phosphomonoester.. Its function is as follows. Double-stranded RNA (dsRNA) endoribonuclease playing a central role in short dsRNA-mediated post-transcriptional gene silencing. Cleaves naturally occurring long dsRNAs and short hairpin pre-microRNAs (miRNA) into fragments of twenty-one to twenty-three nucleotides with 3' overhang of two nucleotides, producing respectively short interfering RNAs (siRNA) and mature microRNAs. SiRNAs and miRNAs serve as guide to direct the RNA-induced silencing complex (RISC) to complementary RNAs to degrade them or prevent their translation. Gene silencing mediated by siRNAs, also called RNA interference, controls the elimination of transcripts from mobile and repetitive DNA elements of the genome but also the degradation of exogenous RNA of viral origin for instance. The miRNA pathway on the other side is a mean to specifically regulate the expression of target genes. This Gallus gallus (Chicken) protein is Endoribonuclease Dicer (DICER1).